Consider the following 312-residue polypeptide: Phosphoribosylaminoimidazole-succinocarboxamide synthase (312 aa).

It belongs to the SAICAR synthetase family.

It catalyses the reaction 5-amino-1-(5-phospho-D-ribosyl)imidazole-4-carboxylate + L-aspartate + ATP = (2S)-2-[5-amino-1-(5-phospho-beta-D-ribosyl)imidazole-4-carboxamido]succinate + ADP + phosphate + 2 H(+). It functions in the pathway purine metabolism; IMP biosynthesis via de novo pathway; 5-amino-1-(5-phospho-D-ribosyl)imidazole-4-carboxamide from 5-amino-1-(5-phospho-D-ribosyl)imidazole-4-carboxylate: step 1/2. The sequence is that of Phosphoribosylaminoimidazole-succinocarboxamide synthase from Legionella pneumophila (strain Lens).